The sequence spans 375 residues: Nicotinate-nucleotide--dimethylbenzimidazole phosphoribosyltransferase (375 aa).

The Proton acceptor role is filled by Glu-323. The interval 344 to 375 (LPEKPEELEAGEGPEAAEESSPEPENPEALAE) is disordered. Over residues 351–375 (LEAGEGPEAAEESSPEPENPEALAE) the composition is skewed to acidic residues.

The protein belongs to the CobT family.

The enzyme catalyses 5,6-dimethylbenzimidazole + nicotinate beta-D-ribonucleotide = alpha-ribazole 5'-phosphate + nicotinate + H(+). It participates in nucleoside biosynthesis; alpha-ribazole biosynthesis; alpha-ribazole from 5,6-dimethylbenzimidazole: step 1/2. Its function is as follows. Catalyzes the synthesis of alpha-ribazole-5'-phosphate from nicotinate mononucleotide (NAMN) and 5,6-dimethylbenzimidazole (DMB). The protein is Nicotinate-nucleotide--dimethylbenzimidazole phosphoribosyltransferase of Streptomyces avermitilis (strain ATCC 31267 / DSM 46492 / JCM 5070 / NBRC 14893 / NCIMB 12804 / NRRL 8165 / MA-4680).